Here is an 840-residue protein sequence, read N- to C-terminus: MAAHILKDVVAYVEVWSSNGTENYSKTFTTQLVDMGAKVSKTFNKQVTHVIFKDGYQSTWDKAQKRGVKLVSVLWVEKCRTAGAHIDESLFPAINTNEHLPSLIKKKRKCMQPKDFNFKTPENDKRFQKKFEKMAKELQRQKTSLDDDVPILLFESSGSLTYSPTIKINSSHHSAMEKRLQEMKEKRENLSPSSSQMIQQSHDNPSNSLCEAPLNISRDTLCSDESFAGGVHSSFDDLCGNSGCGNQERKLGGSINDIESDMCISSLVLKANNIHSSPSFTHLDKSSPQKFLSNLSKEEINLQRNIAGKIVTPDQKQAAGMSQETFEEKYRLSPTLSSTKGHLLIRSRPSSSSVKRQRVSHGSHSPSKGKSKRKRSIRRSIMPRLQLCRSEGSLQHVAGPALKALSCGESSYDDYFSPDNLKERNSENLPPTSQLPSSLAQFSCRSLSKKERTSIFEMSDFSCIGKKTRTVDITSFTAKTISSPQKTANGEGRATLSCVTSEESSAPGETLRCCRQAGKEDACPEGNGFSYTIEDPPFPKGHDGDLTPLEGSLEEVKEAVGLKSTQNKGTTSKISNSSEGEAQSEHEPCFIVDCNMETSTEEKENLPGGYGGSVKNRPTRHDLLDDSCDSFKDLIKPHEELKKSGRGKKPTRTLVMTSMPSEKQNVVIQVVDKLKGFSIAPDVCETTTHVLSGKPLRTLNVLLGIARGCWVLSYDWVLWSLELGHWISEEPFELSNHFPAAPLCRSECHLSAGPYRGTLFADQPVMFVSPASSPPVAKLCELVHLCGGRVSQVPRQASIVIGPYSGKKKATVKYLSEKWVLDSIIQHKVCASENYLLPQR.

The BRCT 1 domain occupies 1 to 93 (MAAHILKDVV…AHIDESLFPA (93 aa)). The disordered stretch occupies residues 184-206 (KEKRENLSPSSSQMIQQSHDNPS). The span at 190–206 (LSPSSSQMIQQSHDNPS) shows a compositional bias: polar residues. Ser279, Ser287, Ser296, and Ser333 each carry phosphoserine. Disordered regions lie at residues 313-379 (PDQK…SIRR) and 418-437 (PDNLKERNSENLPPTSQLPS). Thr335 is subject to Phosphothreonine. Residues 355-378 (KRQRVSHGSHSPSKGKSKRKRSIR) are compositionally biased toward basic residues. Polar residues predominate over residues 427–437 (ENLPPTSQLPS). Residue Ser552 is modified to Phosphoserine. Positions 562–586 (LKSTQNKGTTSKISNSSEGEAQSEH) are disordered. Polar residues predominate over residues 563–581 (KSTQNKGTTSKISNSSEGE). BRCT domains follow at residues 644 to 734 (SGRG…PFEL) and 755 to 837 (YRGT…NYLL).

Interacts with CDC27 and maybe other components of the APC/C complex. Interacts with histone variant H2AX under DNA damage conditions.

Its subcellular location is the cytoplasm. The protein localises to the cytoskeleton. It is found in the microtubule organizing center. The protein resides in the centrosome. Its function is as follows. Implicated in chromosome condensation and DNA damage induced cellular responses. May play a role in neurogenesis and regulation of the size of the cerebral cortex. The protein is Microcephalin of Hylobates lar (Lar gibbon).